Here is a 153-residue protein sequence, read N- to C-terminus: Coiled-coil-helix-coiled-coil-helix domain-containing protein 2 (153 aa).

Disordered stretches follow at residues 1 to 51 (MPRG…AAPR) and 78 to 106 (HAIT…QGAQ). The span at 14-51 (PPASRAPQMRAAPRRAPAAQPPAAAAPSAVGSPAAAPR) shows a compositional bias: low complexity. The CHCH domain occupies 113-153 (FGPCSLEIKQFLECAQNQSDVKLCEGFNEVLRQCRIANGLM). 2 consecutive short sequence motifs (cx9C motif) follow at residues 116 to 126 (CSLEIKQFLEC) and 136 to 146 (CEGFNEVLRQC). 2 disulfides stabilise this stretch: Cys-116–Cys-146 and Cys-126–Cys-136.

In terms of assembly, interacts with RBPJ.

Its subcellular location is the nucleus. It is found in the mitochondrion. The protein resides in the mitochondrion intermembrane space. Its function is as follows. Transcription factor. Binds to the oxygen responsive element of COX4I2 and activates its transcription under hypoxia conditions (4% oxygen), as well as normoxia conditions (20% oxygen). In Mus musculus (Mouse), this protein is Coiled-coil-helix-coiled-coil-helix domain-containing protein 2 (Chchd2).